Consider the following 491-residue polypeptide: UDP-N-acetylmuramate--L-alanine ligase (491 aa).

126 to 132 (GTHGKTT) provides a ligand contact to ATP.

The protein belongs to the MurCDEF family.

It localises to the cytoplasm. It catalyses the reaction UDP-N-acetyl-alpha-D-muramate + L-alanine + ATP = UDP-N-acetyl-alpha-D-muramoyl-L-alanine + ADP + phosphate + H(+). Its pathway is cell wall biogenesis; peptidoglycan biosynthesis. Its function is as follows. Cell wall formation. This is UDP-N-acetylmuramate--L-alanine ligase from Escherichia coli O1:K1 / APEC.